Consider the following 597-residue polypeptide: DNA polymerase III subunit gamma/tau (597 aa).

Residue 44–51 (GERGTGKT) participates in ATP binding. Cysteine 63, cysteine 72, cysteine 75, and cysteine 78 together coordinate Zn(2+).

It belongs to the DnaX/STICHEL family. As to quaternary structure, DNA polymerase III contains a core (composed of alpha, epsilon and theta chains) that associates with a tau subunit. This core dimerizes to form the POLIII' complex. PolIII' associates with the gamma complex (composed of gamma, delta, delta', psi and chi chains) and with the beta chain to form the complete DNA polymerase III complex.

It catalyses the reaction DNA(n) + a 2'-deoxyribonucleoside 5'-triphosphate = DNA(n+1) + diphosphate. Its function is as follows. DNA polymerase III is a complex, multichain enzyme responsible for most of the replicative synthesis in bacteria. This DNA polymerase also exhibits 3' to 5' exonuclease activity. The protein is DNA polymerase III subunit gamma/tau (dnaX) of Mycoplasma genitalium (strain ATCC 33530 / DSM 19775 / NCTC 10195 / G37) (Mycoplasmoides genitalium).